The following is a 494-amino-acid chain: Glycerol kinase (494 aa).

Thr-12 contacts ADP. Residues Thr-12, Thr-13, and Ser-14 each coordinate ATP. Sn-glycerol 3-phosphate is bound at residue Thr-12. Arg-16 serves as a coordination point for ADP. Positions 82, 83, 134, and 243 each coordinate sn-glycerol 3-phosphate. Arg-82, Glu-83, Tyr-134, Asp-243, and Gln-244 together coordinate glycerol. Residues Thr-265 and Gly-308 each coordinate ADP. 4 residues coordinate ATP: Thr-265, Gly-308, Gln-312, and Gly-408. ADP is bound by residues Gly-408 and Asn-412.

This sequence belongs to the FGGY kinase family.

The enzyme catalyses glycerol + ATP = sn-glycerol 3-phosphate + ADP + H(+). The protein operates within polyol metabolism; glycerol degradation via glycerol kinase pathway; sn-glycerol 3-phosphate from glycerol: step 1/1. Inhibited by fructose 1,6-bisphosphate (FBP). Functionally, key enzyme in the regulation of glycerol uptake and metabolism. Catalyzes the phosphorylation of glycerol to yield sn-glycerol 3-phosphate. The protein is Glycerol kinase of Marinomonas sp. (strain MWYL1).